The sequence spans 622 residues: Peptidoglycan O-acetyltransferase OatA (622 aa).

Helical transmembrane passes span 11 to 31 (YVPS…AYHL), 39 to 59 (GFIG…NILL), 81 to 101 (LIPA…FFHP), 143 to 163 (LWSL…LLVF), 173 to 193 (LLKI…ILYV), 212 to 232 (LLSG…PVVP), 237 to 257 (AVLN…TAFV), 267 to 287 (GGLL…SHPA), 307 to 327 (YGIY…LEIT), 334 to 354 (AILQ…FIET), and 387 to 407 (IAGV…VLSV). The interval 412 to 467 (EKQQTSVKTTTSTPDEKKDDKKEDKATKDKEADSNKASEQKETQKPDNKNKSAATP) is disordered. The segment covering 413 to 424 (KQQTSVKTTTST) has biased composition (low complexity). Residues 425–461 (PDEKKDDKKEDKATKDKEADSNKASEQKETQKPDNKN) show a composition bias toward basic and acidic residues. Catalysis depends on residues Ser480, Asp600, and His603.

It belongs to the acyltransferase 3 family.

Its subcellular location is the cell membrane. It localises to the secreted. The protein localises to the cell wall. Functionally, responsible for O-acetylation at the C6-hydroxyl group of N-acetylmuramyl residues, forming the corresponding N,6-O-diacetylmuramic acid of the peptidoglycan. O-acetylation of the peptidoglycan is the major determinant for lysozyme resistance. Critical for virulence and escape from innate immune response of the host. Involved at both early and later stages of listeriosis in the mouse model of infection. Required for successful host colonization and for intracellular survival of bacteria in macrophages of the infected host. Controls the production of inflammatory mediators in the liver of the infected host. Confers resistance to host antimicrobial molecules and to cell wall-targeting molecules such as beta-lactam antibiotics and bacteriocins. This chain is Peptidoglycan O-acetyltransferase OatA, found in Listeria monocytogenes serovar 1/2a (strain ATCC BAA-679 / EGD-e).